A 478-amino-acid polypeptide reads, in one-letter code: Puromycin-sensitive aminopeptidase-like protein (478 aa).

Residues Glu-180 and 316 to 320 (GAMEN) each bind substrate. His-352 contributes to the Zn(2+) binding site. Residue Glu-353 is the Proton acceptor of the active site. Zn(2+)-binding residues include His-356 and Glu-375.

This sequence belongs to the peptidase M1 family. Zn(2+) is required as a cofactor.

In terms of biological role, aminopeptidase with broad substrate specificity to several peptides. In Homo sapiens (Human), this protein is Puromycin-sensitive aminopeptidase-like protein (NPEPPSL1).